The following is a 465-amino-acid chain: Trigger factor (465 aa).

The region spanning G163–A248 is the PPIase FKBP-type domain. The tract at residues E431–K465 is disordered. Over residues E443–K465 the composition is skewed to basic and acidic residues.

It belongs to the FKBP-type PPIase family. Tig subfamily.

Its subcellular location is the cytoplasm. The catalysed reaction is [protein]-peptidylproline (omega=180) = [protein]-peptidylproline (omega=0). Functionally, involved in protein export. Acts as a chaperone by maintaining the newly synthesized protein in an open conformation. Functions as a peptidyl-prolyl cis-trans isomerase. This is Trigger factor from Mesomycoplasma hyopneumoniae (strain 232) (Mycoplasma hyopneumoniae).